Consider the following 138-residue polypeptide: Translation initiation factor 2 subunit beta (138 aa).

The protein belongs to the eIF-2-beta/eIF-5 family. As to quaternary structure, heterotrimer composed of an alpha, a beta and a gamma chain.

Functionally, eIF-2 functions in the early steps of protein synthesis by forming a ternary complex with GTP and initiator tRNA. The chain is Translation initiation factor 2 subunit beta from Methanococcus maripaludis (strain DSM 14266 / JCM 13030 / NBRC 101832 / S2 / LL).